The sequence spans 213 residues: FMN-dependent NADH:quinone oxidoreductase 1 (213 aa).

An FMN-binding site is contributed by 18 to 20 (SVS).

This sequence belongs to the azoreductase type 1 family. As to quaternary structure, homodimer. It depends on FMN as a cofactor.

The catalysed reaction is 2 a quinone + NADH + H(+) = 2 a 1,4-benzosemiquinone + NAD(+). It carries out the reaction N,N-dimethyl-1,4-phenylenediamine + anthranilate + 2 NAD(+) = 2-(4-dimethylaminophenyl)diazenylbenzoate + 2 NADH + 2 H(+). Its function is as follows. Quinone reductase that provides resistance to thiol-specific stress caused by electrophilic quinones. Also exhibits azoreductase activity. Catalyzes the reductive cleavage of the azo bond in aromatic azo compounds to the corresponding amines. The sequence is that of FMN-dependent NADH:quinone oxidoreductase 1 from Bacillus cereus (strain ATCC 10987 / NRS 248).